Here is a 170-residue protein sequence, read N- to C-terminus: Prenyl-diphosphate phosphatase (170 aa).

One can recognise a Nudix hydrolase domain in the interval histidine 25 to glutamate 155. A Nudix box motif is present at residues tyrosine 59–glycine 83. Glutamate 77 and glutamate 81 together coordinate Mg(2+).

It belongs to the Nudix hydrolase family. Requires Mg(2+) as cofactor.

The enzyme catalyses dimethylallyl diphosphate + H2O = dimethylallyl phosphate + phosphate + H(+). It catalyses the reaction isopentenyl diphosphate + H2O = isopentenyl phosphate + phosphate + H(+). The catalysed reaction is (2E,6E)-farnesyl diphosphate + H2O = (2E,6E)-farnesyl phosphate + phosphate + H(+). It carries out the reaction (2E)-geranyl diphosphate + H2O = (2E)-geranyl phosphate + phosphate + H(+). The protein operates within isoprenoid biosynthesis. Functionally, hydrolyzes homoallylic isopentenyl diphosphate (IPP), its allylic isomer dimethylallyl diphosphate (DMAPP) and short-chain prenyl diphosphates geranyl diphosphate (GPP) and farnesyl diphosphate (FPP) to their corresponding monophosphate forms with high activity. The preferred substrate is IPP. ADP, NADPH, Ap5A and thiamine diphosphate (TPP) are weakly hydrolyzed. No hydrolysis with ATP, dNTPs, 8-OH-dGTP, NAD+, FAD or acetyl-CoA. The likely physiological role of this enzyme is to provide a substrate dimethylallyl phosphate (DMAP) for prenylated flavin mononucleotide (prenyl-FMN) synthase MM_1871 involved in the biosynthesis of prenyl-FMN, a coenzyme required in the archaea-specific mevalonate pathway. The sequence is that of Prenyl-diphosphate phosphatase from Methanosarcina mazei (strain ATCC BAA-159 / DSM 3647 / Goe1 / Go1 / JCM 11833 / OCM 88) (Methanosarcina frisia).